Reading from the N-terminus, the 307-residue chain is Mitochondrial brown fat uncoupling protein 1 (307 aa).

Over 2–10 (VNPTTSEVH) the chain is Mitochondrial intermembrane. A helical transmembrane segment spans residues 11 to 32 (PTMGVKIFSAGVAACLADIITF). Solcar repeat units follow at residues 11 to 102 (PTMG…VQEY), 111 to 201 (PTLG…MKGA), and 210 to 295 (DDVP…LKKE). Over 33–73 (PLDTAKVRLQIQGEGQISSTIRYKGVLGTITTLAKTEGLPK) the chain is Mitochondrial matrix. Residue K56 participates in fatty acid 16:0 binding. Residues 74-96 (LYSGLPAGIQRQISFASLRIGLY) traverse the membrane as a helical segment. The Mitochondrial intermembrane segment spans residues 97 to 116 (DTVQEYFSSGKETPPTLGNR). A helical membrane pass occupies residues 117 to 133 (ISAGLMTGGVAVFIGQP). The Mitochondrial matrix segment spans residues 134–178 (TEVVKVRLQAQSHLHGIKPRYTGTYNAYRIIATTESFSTLWKGTT). Residues 179-195 (PNLLRNVIINCVELVTY) form a helical membrane-spanning segment. The Mitochondrial intermembrane portion of the chain corresponds to 196 to 212 (DLMKGALVNNQILADDV). The chain crosses the membrane as a helical span at residues 213–232 (PCHLLSAFVAGFCTTFLASP). At 233-266 (ADVVKTRFINSLPGQYPSVPSCAMTMLTKEGPTA) the chain is on the mitochondrial matrix side. C254 bears the Cysteine sulfenic acid (-SOH) mark. Residues 267 to 289 (FFKGFVPSFLRLASWNVIMFVCF) form a helical membrane-spanning segment. K269 provides a ligand contact to fatty acid 16:0. The Mitochondrial intermembrane portion of the chain corresponds to 290–307 (EQLKKELSKSRQTVDCTT).

Belongs to the mitochondrial carrier (TC 2.A.29) family. In terms of assembly, most probably functions as a monomer. Binds one purine nucleotide per monomer. However, has also been suggested to function as a homodimer or a homotetramer. Tightly associates with cardiolipin in the mitochondrion inner membrane; may stabilize and regulate its activity. Post-translationally, may undergo sulfenylation upon cold exposure. May increase the sensitivity of UCP1 thermogenic function to the activation by noradrenaline probably through structural effects. May undergo ubiquitin-mediated proteasomal degradation. Brown adipose tissue.

It localises to the mitochondrion inner membrane. It carries out the reaction H(+)(in) = H(+)(out). Its activity is regulated as follows. Has no constitutive proton transporter activity and has to be activated by long-chain fatty acids/LCFAs. Inhibited by purine nucleotides. Both purine nucleotides and LCFAs bind the cytosolic side of the transporter and directly compete to activate or inhibit it. Activated by noradrenaline and reactive oxygen species. Despite lacking canonical translational encoding for selenocysteine, a small pool of the protein has been observed to selectively incorporate selenocysteine at 'Cys-254'. Selenocysteine-modified protein is highly sensitive to redox modification and may constitute a pool of protein highly sensitive to activation by elevated levels of reactive oxygen species (ROS). Its function is as follows. Mitochondrial protein responsible for thermogenic respiration, a specialized capacity of brown adipose tissue and beige fat that participates in non-shivering adaptive thermogenesis to temperature and diet variations and more generally to the regulation of energy balance. Functions as a long-chain fatty acid/LCFA and proton symporter, simultaneously transporting one LCFA and one proton through the inner mitochondrial membrane. However, LCFAs remaining associated with the transporter via their hydrophobic tails, it results in an apparent transport of protons activated by LCFAs. Thereby, dissipates the mitochondrial proton gradient and converts the energy of substrate oxydation into heat instead of ATP. Regulates the production of reactive oxygen species/ROS by mitochondria. In Mesocricetus auratus (Golden hamster), this protein is Mitochondrial brown fat uncoupling protein 1.